Here is a 401-residue protein sequence, read N- to C-terminus: Phosphoglycerate kinase (401 aa).

Substrate-binding positions include 24-26 (DFN), Arg40, 63-66 (HFGR), Arg122, and Arg155. Residues Lys206, Gly297, Glu328, and 357 to 360 (GGDS) each bind ATP.

The protein belongs to the phosphoglycerate kinase family. In terms of assembly, monomer.

The protein resides in the cytoplasm. It catalyses the reaction (2R)-3-phosphoglycerate + ATP = (2R)-3-phospho-glyceroyl phosphate + ADP. It participates in carbohydrate degradation; glycolysis; pyruvate from D-glyceraldehyde 3-phosphate: step 2/5. The chain is Phosphoglycerate kinase from Acaryochloris marina (strain MBIC 11017).